Reading from the N-terminus, the 144-residue chain is DNA-directed RNA polymerases II and V subunit 6B (144 aa).

Over residues 1–32 the composition is skewed to acidic residues; the sequence is MADDDYNEVDDLGYEDEPAEPEIEEGVEEDAD. Residues 1–62 form a disordered region; the sequence is MADDDYNEVD…EPVQRPRKTS (62 aa). Basic and acidic residues predominate over residues 46 to 56; the sequence is TEDKVETEPVQ.

The protein belongs to the archaeal Rpo6/eukaryotic RPB6 RNA polymerase subunit family. In terms of assembly, component of the RNA polymerase II and V complexes.

It is found in the nucleus. DNA-dependent RNA polymerase catalyzes the transcription of DNA into RNA using the four ribonucleoside triphosphates as substrates. Component of RNA polymerase II which synthesizes mRNA precursors and many functional non-coding RNAs. Pol II is the central component of the basal RNA polymerase II transcription machinery. It is composed of mobile elements that move relative to each other. Component of RNA polymerase V which mediates RNA-directed DNA methylation-dependent (RdDM) transcriptional gene silencing (TGS) of endogenous repeated sequences, including transposable elements. The chain is DNA-directed RNA polymerases II and V subunit 6B (NRPB6B) from Arabidopsis thaliana (Mouse-ear cress).